The primary structure comprises 366 residues: Quinolinate synthase (366 aa).

The iminosuccinate site is built by His-44 and Ser-61. Cys-108 serves as a coordination point for [4Fe-4S] cluster. Iminosuccinate-binding positions include 139 to 141 (YIN) and Ser-160. Residue Cys-228 coordinates [4Fe-4S] cluster. Residues 254-256 (HPE) and Thr-271 contribute to the iminosuccinate site. A [4Fe-4S] cluster-binding site is contributed by Cys-318.

This sequence belongs to the quinolinate synthase family. Type 3 subfamily. [4Fe-4S] cluster serves as cofactor.

It localises to the cytoplasm. It catalyses the reaction iminosuccinate + dihydroxyacetone phosphate = quinolinate + phosphate + 2 H2O + H(+). It participates in cofactor biosynthesis; NAD(+) biosynthesis; quinolinate from iminoaspartate: step 1/1. Its function is as follows. Catalyzes the condensation of iminoaspartate with dihydroxyacetone phosphate to form quinolinate. The sequence is that of Quinolinate synthase from Listeria monocytogenes serotype 4b (strain F2365).